A 251-amino-acid chain; its full sequence is Adenosylcobinamide-GDP ribazoletransferase (251 aa).

6 consecutive transmembrane segments (helical) span residues 36–56 (LYPF…FVLS), 60–80 (VPIM…TGFL), 110–130 (VGAF…AGIF), 181–201 (EIIL…TLGI), 202–222 (NYLI…LKVK), and 231–251 (DVAG…LGII).

It belongs to the CobS family. Requires Mg(2+) as cofactor.

It is found in the cell membrane. The catalysed reaction is alpha-ribazole + adenosylcob(III)inamide-GDP = adenosylcob(III)alamin + GMP + H(+). It carries out the reaction alpha-ribazole 5'-phosphate + adenosylcob(III)inamide-GDP = adenosylcob(III)alamin 5'-phosphate + GMP + H(+). The protein operates within cofactor biosynthesis; adenosylcobalamin biosynthesis; adenosylcobalamin from cob(II)yrinate a,c-diamide: step 7/7. Joins adenosylcobinamide-GDP and alpha-ribazole to generate adenosylcobalamin (Ado-cobalamin). Also synthesizes adenosylcobalamin 5'-phosphate from adenosylcobinamide-GDP and alpha-ribazole 5'-phosphate. In Clostridium perfringens (strain SM101 / Type A), this protein is Adenosylcobinamide-GDP ribazoletransferase.